The sequence spans 160 residues: Non-secretory ribonuclease (160 aa).

The N-terminal stretch at 1–27 (MVPKLFTSPICLLLLLGLMGVEGSLHA) is a signal peptide. Trp-34 carries C-linked (Man) tryptophan glycosylation. Residue His-42 is the Proton acceptor of the active site. Asn-44 is a glycosylation site (N-linked (GlcNAc...) asparagine). Cystine bridges form between Cys-50/Cys-110, Cys-64/Cys-122, Cys-82/Cys-137, and Cys-89/Cys-98. 3'-nitrotyrosine is present on Tyr-60. 65-69 (KNQNT) provides a ligand contact to substrate. 3 N-linked (GlcNAc...) asparagine glycosylation sites follow: Asn-92, Asn-111, and Asn-138. Catalysis depends on His-155, which acts as the Proton donor.

The protein belongs to the pancreatic ribonuclease family. In terms of assembly, interacts with and forms a tight 1:1 complex with RNH1. Dimerization of two such complexes may occur.

The protein localises to the lysosome. The protein resides in the cytoplasmic granule. The enzyme catalyses an [RNA] containing cytidine + H2O = an [RNA]-3'-cytidine-3'-phosphate + a 5'-hydroxy-ribonucleotide-3'-[RNA].. The catalysed reaction is an [RNA] containing uridine + H2O = an [RNA]-3'-uridine-3'-phosphate + a 5'-hydroxy-ribonucleotide-3'-[RNA].. This is a non-secretory ribonuclease. It is a pyrimidine specific nuclease with a slight preference for U. Cytotoxin and helminthotoxin. Possesses a wide variety of biological activities. The sequence is that of Non-secretory ribonuclease (RNASE2) from Papio hamadryas (Hamadryas baboon).